The sequence spans 361 residues: Biotin synthase (361 aa).

The disordered stretch occupies residues 14–38 (AQRTPEPLPPTSQGLARPSHDVVRG). A Radical SAM core domain is found at 86–315 (HKGGPAALCG…ARDILVCGGR (230 aa)). Cys-104, Cys-108, and Cys-111 together coordinate [4Fe-4S] cluster. [2Fe-2S] cluster contacts are provided by Cys-180 and Cys-240.

Belongs to the radical SAM superfamily. Biotin synthase family. As to quaternary structure, homodimer. [4Fe-4S] cluster is required as a cofactor. Requires [2Fe-2S] cluster as cofactor.

The catalysed reaction is (4R,5S)-dethiobiotin + (sulfur carrier)-SH + 2 reduced [2Fe-2S]-[ferredoxin] + 2 S-adenosyl-L-methionine = (sulfur carrier)-H + biotin + 2 5'-deoxyadenosine + 2 L-methionine + 2 oxidized [2Fe-2S]-[ferredoxin]. It functions in the pathway cofactor biosynthesis; biotin biosynthesis; biotin from 7,8-diaminononanoate: step 2/2. Functionally, catalyzes the conversion of dethiobiotin (DTB) to biotin by the insertion of a sulfur atom into dethiobiotin via a radical-based mechanism. This is Biotin synthase from Nitratidesulfovibrio vulgaris (strain DP4) (Desulfovibrio vulgaris).